Consider the following 195-residue polypeptide: Heat shock protein beta-8 (195 aa).

A Phosphoserine modification is found at Ser56. Thr62 is subject to Phosphothreonine. Asymmetric dimethylarginine occurs at positions 70 and 77. Positions 73-184 constitute a sHSP domain; sequence TATARFGVPA…TFGESSFNNE (112 aa). The disordered stretch occupies residues 175–195; the sequence is TFGESSFNNELPQDSQEVTCT. Polar residues predominate over residues 176-195; the sequence is FGESSFNNELPQDSQEVTCT.

Belongs to the small heat shock protein (HSP20) family. As to quaternary structure, monomer. Forms a ternary complex with BAG3 and HSPA1A. Component of the chaperone-assisted selective autophagy (CASA) complex consisting of BAG3, HSPA8/HSC70, HSPB8 and STUB1/CHIP. Interacts with HSPB1. Interacts with DNAJB6. Interacts with BAG3. Post-translationally, phosphorylated.

It is found in the cytoplasm. The protein resides in the nucleus. Involved in the chaperone-assisted selective autophagy (CASA), a crucial process for protein quality control, particularly in mechanical strained cells and tissues such as muscle. Displays temperature-dependent chaperone activity. This Macaca mulatta (Rhesus macaque) protein is Heat shock protein beta-8 (HSPB8).